The primary structure comprises 405 residues: Phosphopentomutase (405 aa).

Residues aspartate 10, aspartate 303, histidine 308, aspartate 344, histidine 345, and histidine 356 each contribute to the Mn(2+) site.

Belongs to the phosphopentomutase family. The cofactor is Mn(2+).

It localises to the cytoplasm. It catalyses the reaction 2-deoxy-alpha-D-ribose 1-phosphate = 2-deoxy-D-ribose 5-phosphate. The catalysed reaction is alpha-D-ribose 1-phosphate = D-ribose 5-phosphate. Its pathway is carbohydrate degradation; 2-deoxy-D-ribose 1-phosphate degradation; D-glyceraldehyde 3-phosphate and acetaldehyde from 2-deoxy-alpha-D-ribose 1-phosphate: step 1/2. Isomerase that catalyzes the conversion of deoxy-ribose 1-phosphate (dRib-1-P) and ribose 1-phosphate (Rib-1-P) to deoxy-ribose 5-phosphate (dRib-5-P) and ribose 5-phosphate (Rib-5-P), respectively. The polypeptide is Phosphopentomutase (Shewanella woodyi (strain ATCC 51908 / MS32)).